Consider the following 1044-residue polypeptide: Isoleucine--tRNA ligase (1044 aa).

Residues 48 to 58 carry the 'HIGH' region motif; it reads PFATGLPHFGH. The 'KMSKS' region motif lies at 594–598; the sequence is KMSKS. Lysine 597 contacts ATP.

This sequence belongs to the class-I aminoacyl-tRNA synthetase family. IleS type 2 subfamily. As to quaternary structure, monomer. Requires Zn(2+) as cofactor.

It localises to the cytoplasm. The enzyme catalyses tRNA(Ile) + L-isoleucine + ATP = L-isoleucyl-tRNA(Ile) + AMP + diphosphate. Functionally, catalyzes the attachment of isoleucine to tRNA(Ile). As IleRS can inadvertently accommodate and process structurally similar amino acids such as valine, to avoid such errors it has two additional distinct tRNA(Ile)-dependent editing activities. One activity is designated as 'pretransfer' editing and involves the hydrolysis of activated Val-AMP. The other activity is designated 'posttransfer' editing and involves deacylation of mischarged Val-tRNA(Ile). This chain is Isoleucine--tRNA ligase, found in Borrelia recurrentis (strain A1).